A 156-amino-acid chain; its full sequence is Cytochrome c-type biogenesis protein CcmE (156 aa).

The Cytoplasmic segment spans residues 1-7 (MTRRQRR). A helical; Signal-anchor for type II membrane protein membrane pass occupies residues 8-28 (LGILLAALVCAGAATALTLNA). The Periplasmic portion of the chain corresponds to 29-156 (FRSNLVFFFS…AKESARSASR (128 aa)). Residues His-123 and Tyr-127 each contribute to the heme site.

The protein belongs to the CcmE/CycJ family.

The protein localises to the cell inner membrane. In terms of biological role, heme chaperone required for the biogenesis of c-type cytochromes. Transiently binds heme delivered by CcmC and transfers the heme to apo-cytochromes in a process facilitated by CcmF and CcmH. This is Cytochrome c-type biogenesis protein CcmE from Ralstonia pickettii (strain 12J).